The following is a 254-amino-acid chain: Alcohol dehydrogenase (254 aa).

M1 is modified (N-acetylmethionine). Residue 10–33 (FVAALGGIGLDTSRELVKRNLKNF) participates in NAD(+) binding. S138 provides a ligand contact to substrate. Y151 (proton acceptor) is an active-site residue.

The protein belongs to the short-chain dehydrogenases/reductases (SDR) family. In terms of assembly, homodimer.

It catalyses the reaction a primary alcohol + NAD(+) = an aldehyde + NADH + H(+). It carries out the reaction a secondary alcohol + NAD(+) = a ketone + NADH + H(+). This chain is Alcohol dehydrogenase (Adh), found in Drosophila lebanonensis (Fruit fly).